A 1215-amino-acid chain; its full sequence is Endoplasmic reticulum transmembrane helix translocase (1215 aa).

Over 1-27 (MTKKSFVSSPIVRDSTLLVPKSLIAKP) the chain is Cytoplasmic. A helical transmembrane segment spans residues 28-43 (YVLPFFPLYATFAQLY). At 44–56 (FQQYDRYIKGPEW) the chain is on the lumenal side. The helical transmembrane segment at 57–76 (TFVYLGTLVSLNILVMLMPA) threads the bilayer. Residues 77–188 (WNVKIKAKFN…ENSFDIPIPT (112 aa)) are Cytoplasmic-facing. Residues 156–185 (KIGDFQKCKGHSGDLTHLKRLYGENSFDIP) are A-domain; part 1. A helical transmembrane segment spans residues 189-216 (FMELFKEHAVAPLFVFQVFCVALWLLDE). Phenylalanine 217 is a topological domain (lumenal). A helical transmembrane segment spans residues 218 to 246 (WYYSLFNLFMIISMEAAAVFQRLTALKEF). Residues 247–395 (RTMGIKPYTI…IYSAERVSVD (149 aa)) are Cytoplasmic-facing. The interval 250 to 390 (GIKPYTINVF…LVRVMIYSAE (141 aa)) is A-domain; part 2. Phosphoserine is present on serine 324. The helical transmembrane segment at 396–425 (NKEALMFILFLLIFAVIASWYVWVEGTKMG) threads the bilayer. Residues 426–427 (RI) lie on the Lumenal side of the membrane. A run of 2 helical transmembrane segments spans residues 428-442 (QSKL…ITSV) and 446-464 (ELPM…ALAK). Over 465–971 (FYVYCTEPFR…APFTSKLANV (507 aa)) the chain is Cytoplasmic. The tract at residues 466–495 (YVYCTEPFRIPFAGRIDVCCFDKTGTLTGE) is P-domain; part 1. Aspartate 487 serves as the catalytic 4-aspartylphosphate intermediate. Residues aspartate 487 and threonine 489 each coordinate Mg(2+). ATP is bound by residues 487–489 (DKT), phenylalanine 582, arginine 634, aspartate 699, and 816–820 (DGTND). The N-domain stretch occupies residues 497 to 674 (LVFEGLAGIS…FNGFLIFHCP (178 aa)). The P-domain; part 2 stretch occupies residues 677 to 837 (DDAIETIKML…HVGIALLNGT (161 aa)). Aspartate 816 serves as a coordination point for Mg(2+). The interval 838-953 (EEGLKKLGEQ…DAQGDEAPAL (116 aa)) is arm-like. The residue at position 936 (serine 936) is a Phosphoserine. Residues 954–969 (KLGDASCAAPFTSKLA) form a P-domain; part 3 region. The chain crosses the membrane as a helical span at residues 972–1011 (SAVTNIIRQGRCALVNTIQMYKILALNCLISAYSLSIIYM). Topologically, residues 1012–1017 (AGVKFG) are lumenal. The helical transmembrane segment at 1018 to 1035 (DGQATVSGLLLSVCFLSI) threads the bilayer. Topologically, residues 1036 to 1055 (SRGKPLEKLSKQRPQSGIFN) are cytoplasmic. The chain crosses the membrane as a helical span at residues 1056–1084 (VYIMGSILSQFAVHIATLVYITTEIYKLE). Residues 1085–1099 (PREPQVDLEKEFAPS) are Lumenal-facing. The chain crosses the membrane as a helical span at residues 1100–1121 (LLNTGIFIIQLVQQVSTFAVNY). The Cytoplasmic segment spans residues 1122–1133 (QGEPFRENIRSN). The chain crosses the membrane as a helical span at residues 1134 to 1151 (KGMYYGLLGVTGLALASA). Over 1152 to 1168 (TEFLPELNEAMKFVPMT) the chain is Lumenal. A helical transmembrane segment spans residues 1169-1197 (DDFKIKLTLTLLLDFFGSWGVEHFFKFFF). Topologically, residues 1198–1215 (MDDKPSDISVQQVKIASK) are cytoplasmic.

This sequence belongs to the cation transport ATPase (P-type) (TC 3.A.3) family. Type V subfamily. Requires Mg(2+) as cofactor.

The protein localises to the endoplasmic reticulum membrane. It catalyses the reaction [protein]-with a C-terminal TM segment(out) + ATP + H2O = [protein]-with a C-terminal TM segment(in) + ADP + phosphate + H(+). The ATPase activity is stimulated by phosphatidylinositol 4-phosphate (PI4P). Functionally, endoplasmic reticulum translocase required to remove mitochondrial transmembrane proteins mistargeted to the endoplasmic reticulum. Acts as a dislocase that mediates the ATP-dependent extraction of mislocalized mitochondrial transmembrane proteins from the endoplasmic reticulum membrane. Specifically binds mitochondrial tail-anchored transmembrane proteins: has an atypically large substrate-binding pocket that recognizes and binds moderately hydrophobic transmembranes with short hydrophilic lumenal domains. The chain is Endoplasmic reticulum transmembrane helix translocase from Saccharomyces cerevisiae (strain ATCC 204508 / S288c) (Baker's yeast).